The following is a 315-amino-acid chain: Gamma-hemolysin component C (315 aa).

The signal sequence occupies residues 1–29; that stretch reads MLKNKILATTLSVSLLAPLANPLLENAKA.

This sequence belongs to the aerolysin family. In terms of assembly, toxicity requires sequential binding and synergistic association of a class S and a class F component which form heterooligomeric complexes. HlgC (class S) associates with HlgB (class F) thus forming an CB toxin.

Its function is as follows. Toxin that seems to act by forming pores in the membrane of the cell. Has a hemolytic and a leucotoxic activity. This chain is Gamma-hemolysin component C (hlgC), found in Staphylococcus aureus (strain MRSA252).